Here is a 137-residue protein sequence, read N- to C-terminus: ATP synthase epsilon chain (137 aa).

It belongs to the ATPase epsilon chain family. F-type ATPases have 2 components, CF(1) - the catalytic core - and CF(0) - the membrane proton channel. CF(1) has five subunits: alpha(3), beta(3), gamma(1), delta(1), epsilon(1). CF(0) has three main subunits: a, b and c.

The protein localises to the cell inner membrane. Produces ATP from ADP in the presence of a proton gradient across the membrane. The chain is ATP synthase epsilon chain from Yersinia pestis bv. Antiqua (strain Antiqua).